Here is a 210-residue protein sequence, read N- to C-terminus: Probable GTP-binding protein EngB (210 aa).

The EngB-type G domain maps to 25–199; the sequence is TGIEVAFAGR…RQKLDTWFSE (175 aa). Residues 33–40, 60–64, 78–81, 145–148, and 178–180 contribute to the GTP site; these read GRSNAGKS, GRTQL, DLPG, TKAD, and FSS. Mg(2+)-binding residues include serine 40 and threonine 62.

This sequence belongs to the TRAFAC class TrmE-Era-EngA-EngB-Septin-like GTPase superfamily. EngB GTPase family. Requires Mg(2+) as cofactor.

Its function is as follows. Necessary for normal cell division and for the maintenance of normal septation. This chain is Probable GTP-binding protein EngB, found in Shigella boydii serotype 4 (strain Sb227).